The sequence spans 285 residues: MAQSEVDSVDCVTSDRDGDIGNQSDDSSNSSLFKTQCVPSPTRKQRIPTVKCVPSLASVETDSSSDSSLEPRPLTLKAIFERFKKKKRKKRKKRKYKPKLRRQGRPSGTRNIRRSQIDAKQIKDKGAVFPFLESESGRKTLPWKKILTYEQAVARGFFHHIEKLKYEHHLKECLSQMHAGEDLEKEDFDSRRHKYMDDDGPLSPIEEPSTEDEATDPQSECDIKLVEDSCFIISTEFPRKRNLEQGKIKKESAFSKKSKAKDATQRGNRRSWKGGEHACLHSEVS.

Disordered regions lie at residues Met-1–Thr-49 and Lys-85–Ile-112. The segment covering Gly-21–Pro-39 has biased composition (polar residues). Position 24 is a phosphoserine (Ser-24). The span at Lys-85–Gly-104 shows a compositional bias: basic residues. Ser-134 is subject to Phosphoserine. The tract at residues His-193–Ser-219 is disordered. Ser-229 carries the phosphoserine modification. Composition is skewed to basic and acidic residues over residues Asn-242–Thr-264 and Lys-273–Ser-285. The tract at residues Asn-242–Ser-285 is disordered.

As to quaternary structure, component of the transcription factor SL1/TIF-IB complex, composed of TBP and at least TAF1A, TAF1B, TAF1C and TAF1D. Interacts with UBTF.

The protein localises to the nucleus. Functionally, component of the transcription factor SL1/TIF-IB complex, which is involved in the assembly of the PIC (preinitiation complex) during RNA polymerase I-dependent transcription. The rate of PIC formation probably is primarily dependent on the rate of association of SL1/TIF-IB with the rDNA promoter. SL1/TIF-IB is involved in stabilization of nucleolar transcription factor 1/UBTF on rDNA. Formation of SL1/TIF-IB excludes the association of TBP with TFIID subunits. This is TATA box-binding protein-associated factor RNA polymerase I subunit D (Taf1d) from Rattus norvegicus (Rat).